Consider the following 140-residue polypeptide: Austinoid biosynthesis clusters protein S (140 aa).

It belongs to the trt14 isomerase family. As to quaternary structure, homodimer.

The protein operates within secondary metabolite biosynthesis; terpenoid biosynthesis. In terms of biological role, part of the gene cluster B that mediates the biosynthesis of austinol and dehydroaustinol, two fungal meroterpenoids. The first step of the pathway is the synthesis of 3,5-dimethylorsellinic acid by the polyketide synthase ausA. 3,5-dimethylorsellinic acid is then prenylated by the polyprenyl transferase ausN. Further epoxidation by the FAD-dependent monooxygenase ausM and cyclization by the probable terpene cyclase ausL lead to the formation of protoaustinoid A. Protoaustinoid A is then oxidized to spiro-lactone preaustinoid A3 by the combined action of the FAD-binding monooxygenases ausB and ausC, and the dioxygenase ausE. Acid-catalyzed keto-rearrangement and ring contraction of the tetraketide portion of preaustinoid A3 by ausJ lead to the formation of preaustinoid A4. The aldo-keto reductase ausK, with the help of ausH, is involved in the next step by transforming preaustinoid A4 into isoaustinone which is in turn hydroxylated by the P450 monooxygenase ausI to form austinolide. Finally, the cytochrome P450 monooxygenase ausG modifies austinolide to austinol. Austinol can be further modified to dehydroaustinol which forms a diffusible complex with diorcinol that initiates conidiation. Due to genetic rearrangements of the clusters and the subsequent loss of some enzymes, the end products of the Emericella nidulans austinoid biosynthesis clusters are austinol and dehydroaustinol, even if additional enzymes, such as the O-acetyltransferase ausQ and the cytochrome P450 monooxygenase ausR are still functional. AusS is necessary for austinoids production and may play a possible function as a regulator. The protein is Austinoid biosynthesis clusters protein S of Emericella nidulans (strain FGSC A4 / ATCC 38163 / CBS 112.46 / NRRL 194 / M139) (Aspergillus nidulans).